A 225-amino-acid chain; its full sequence is Riboflavin kinase (225 aa).

Positions 1-89 (MPDIEYLKKL…SRIFSSEPDT (89 aa)) are unknown. Residues 90–225 (LELEGNVLKG…LKKQGMEGQK (136 aa)) form a riboflavin kinase region. CDP is bound at residue 99-104 (GLGEGQ). 2 residues coordinate Mg(2+): Thr128 and Asn130. Positions 185 and 193 each coordinate FMN. 198-201 (VKLR) serves as a coordination point for CDP.

It belongs to the archaeal riboflavin kinase family. It depends on Mg(2+) as a cofactor.

It catalyses the reaction riboflavin + CTP = CDP + FMN + H(+). Its pathway is cofactor biosynthesis; FMN biosynthesis; FMN from riboflavin (CTP route): step 1/1. Functionally, catalyzes the CTP-dependent phosphorylation of riboflavin (vitamin B2) to form flavin mononucleotide (FMN). The sequence is that of Riboflavin kinase (ribK) from Methanosarcina mazei (strain ATCC BAA-159 / DSM 3647 / Goe1 / Go1 / JCM 11833 / OCM 88) (Methanosarcina frisia).